Consider the following 332-residue polypeptide: MTLLTRIKTETILLESDIKELIDILISPSIGTDIKYELLSSYSEREIQQQELTYIVRSLINTMYPHQPCYEGAMCVCGTGGDKSNSFNISTTVAFVVASAGVKVIKHGNKSITSNSGSTDLLNQMNIQTTTVDDTPNQLNEKDLVFIGATESYPIMKYMQPVRKMIGKPTILNLVGPLINPYHLTYQMVGVFDPTKLKLVAKTIKDLGRKRAIVLHGANGMDEATLSGDNLIYELTEDGEIKNYTLNATDYGLKHAPNSDFKGGSPEENLAISLNILNGKDQSSRRDVVLLNAGLSLYVAEKVDTIAEGIELATTLIDNGEALEKYHQMRGE.

Residues G78, G81 to D82, S86, N88 to T91, K106 to S114, and S118 contribute to the 5-phospho-alpha-D-ribose 1-diphosphate site. Anthranilate is bound at residue G78. S90 contributes to the Mg(2+) binding site. Residue N109 coordinates anthranilate. Residue R163 participates in anthranilate binding. Residues D222 and E223 each coordinate Mg(2+).

This sequence belongs to the anthranilate phosphoribosyltransferase family. In terms of assembly, homodimer. Requires Mg(2+) as cofactor.

The enzyme catalyses N-(5-phospho-beta-D-ribosyl)anthranilate + diphosphate = 5-phospho-alpha-D-ribose 1-diphosphate + anthranilate. It functions in the pathway amino-acid biosynthesis; L-tryptophan biosynthesis; L-tryptophan from chorismate: step 2/5. Catalyzes the transfer of the phosphoribosyl group of 5-phosphorylribose-1-pyrophosphate (PRPP) to anthranilate to yield N-(5'-phosphoribosyl)-anthranilate (PRA). The sequence is that of Anthranilate phosphoribosyltransferase from Staphylococcus aureus (strain USA300).